The sequence spans 48 residues: uncharacterized protein (48 aa).

This is an uncharacterized protein from Acidianus hospitalis (AFV-1).